A 317-amino-acid chain; its full sequence is DNA-directed RNA polymerase subunit alpha (317 aa).

The tract at residues 1–230 (MIEIEMEKPK…EHLNLFITLT (230 aa)) is alpha N-terminal domain (alpha-NTD). The segment at 247–317 (KEKVLEMTIE…LGLGLRPSDE (71 aa)) is alpha C-terminal domain (alpha-CTD).

This sequence belongs to the RNA polymerase alpha chain family. Homodimer. The RNAP catalytic core consists of 2 alpha, 1 beta, 1 beta' and 1 omega subunit. When a sigma factor is associated with the core the holoenzyme is formed, which can initiate transcription.

The catalysed reaction is RNA(n) + a ribonucleoside 5'-triphosphate = RNA(n+1) + diphosphate. Its function is as follows. DNA-dependent RNA polymerase catalyzes the transcription of DNA into RNA using the four ribonucleoside triphosphates as substrates. In Alkaliphilus oremlandii (strain OhILAs) (Clostridium oremlandii (strain OhILAs)), this protein is DNA-directed RNA polymerase subunit alpha.